Consider the following 308-residue polypeptide: Type II restriction enzyme MamI (308 aa).

The enzyme catalyses Endonucleolytic cleavage of DNA to give specific double-stranded fragments with terminal 5'-phosphates.. In terms of biological role, a P subtype restriction enzyme that recognizes the double-stranded sequence 5'-GATNNNNATC-3' and cleaves after N-5. In Microbacterium ammoniaphilum, this protein is Type II restriction enzyme MamI.